A 293-amino-acid polypeptide reads, in one-letter code: Nucleotide-binding protein BBR47_52620 (293 aa).

17 to 24 (GMSGAGKT) provides a ligand contact to ATP. 68–71 (DLRG) contributes to the GTP binding site.

This sequence belongs to the RapZ-like family.

Functionally, displays ATPase and GTPase activities. In Brevibacillus brevis (strain 47 / JCM 6285 / NBRC 100599), this protein is Nucleotide-binding protein BBR47_52620.